A 137-amino-acid polypeptide reads, in one-letter code: Cell division protein SepF (137 aa).

This sequence belongs to the SepF family. In terms of assembly, homodimer. Interacts with FtsZ.

The protein resides in the cytoplasm. In terms of biological role, cell division protein that is part of the divisome complex and is recruited early to the Z-ring. Probably stimulates Z-ring formation, perhaps through the cross-linking of FtsZ protofilaments. Its function overlaps with FtsA. The sequence is that of Cell division protein SepF from Thermoanaerobacter pseudethanolicus (strain ATCC 33223 / 39E) (Clostridium thermohydrosulfuricum).